The chain runs to 232 residues: Adenosylcobinamide-GDP ribazoletransferase (232 aa).

A run of 6 helical transmembrane segments spans residues 32–52 (PIYF…GGSF), 54–74 (NFLL…LFHF), 102–122 (VGPF…TLYL), 126–146 (PITF…LMFF), 172–192 (FFLL…VVTV), and 212–232 (DVLG…LGVV).

It belongs to the CobS family. The cofactor is Mg(2+).

Its subcellular location is the cell inner membrane. It catalyses the reaction alpha-ribazole + adenosylcob(III)inamide-GDP = adenosylcob(III)alamin + GMP + H(+). The enzyme catalyses alpha-ribazole 5'-phosphate + adenosylcob(III)inamide-GDP = adenosylcob(III)alamin 5'-phosphate + GMP + H(+). The protein operates within cofactor biosynthesis; adenosylcobalamin biosynthesis; adenosylcobalamin from cob(II)yrinate a,c-diamide: step 7/7. Joins adenosylcobinamide-GDP and alpha-ribazole to generate adenosylcobalamin (Ado-cobalamin). Also synthesizes adenosylcobalamin 5'-phosphate from adenosylcobinamide-GDP and alpha-ribazole 5'-phosphate. This Thermosipho melanesiensis (strain DSM 12029 / CIP 104789 / BI429) protein is Adenosylcobinamide-GDP ribazoletransferase.